The following is a 179-amino-acid chain: Large ribosomal subunit protein uL5 (179 aa).

It belongs to the universal ribosomal protein uL5 family. As to quaternary structure, part of the 50S ribosomal subunit; part of the 5S rRNA/L5/L18/L25 subcomplex. Contacts the 5S rRNA and the P site tRNA. Forms a bridge to the 30S subunit in the 70S ribosome.

This is one of the proteins that bind and probably mediate the attachment of the 5S RNA into the large ribosomal subunit, where it forms part of the central protuberance. In the 70S ribosome it contacts protein S13 of the 30S subunit (bridge B1b), connecting the 2 subunits; this bridge is implicated in subunit movement. Contacts the P site tRNA; the 5S rRNA and some of its associated proteins might help stabilize positioning of ribosome-bound tRNAs. In Bacillus cereus (strain 03BB102), this protein is Large ribosomal subunit protein uL5.